Reading from the N-terminus, the 539-residue chain is CTP synthase (539 aa).

Positions 1–267 (MTKYIFVTGG…DQKVVDFLHI (267 aa)) are amidoligase domain. Residue Ser-13 participates in CTP binding. Ser-13 is a UTP binding site. Position 14-19 (14-19 (SLGKGI)) interacts with ATP. Tyr-54 lines the L-glutamine pocket. Asp-71 lines the ATP pocket. Mg(2+) is bound by residues Asp-71 and Glu-141. CTP-binding positions include 148-150 (DME), 188-193 (KSKPTQ), and Lys-224. UTP contacts are provided by residues 188–193 (KSKPTQ) and Lys-224. One can recognise a Glutamine amidotransferase type-1 domain in the interval 294–537 (KITLVGKYVE…IGAASGLQVD (244 aa)). Gly-356 contacts L-glutamine. The active-site Nucleophile; for glutamine hydrolysis is Cys-383. L-glutamine-binding positions include 384–387 (LGMQ), Glu-407, and Arg-465. Catalysis depends on residues His-510 and Glu-512.

This sequence belongs to the CTP synthase family. In terms of assembly, homotetramer.

The catalysed reaction is UTP + L-glutamine + ATP + H2O = CTP + L-glutamate + ADP + phosphate + 2 H(+). It catalyses the reaction L-glutamine + H2O = L-glutamate + NH4(+). The enzyme catalyses UTP + NH4(+) + ATP = CTP + ADP + phosphate + 2 H(+). The protein operates within pyrimidine metabolism; CTP biosynthesis via de novo pathway; CTP from UDP: step 2/2. Allosterically activated by GTP, when glutamine is the substrate; GTP has no effect on the reaction when ammonia is the substrate. The allosteric effector GTP functions by stabilizing the protein conformation that binds the tetrahedral intermediate(s) formed during glutamine hydrolysis. Inhibited by the product CTP, via allosteric rather than competitive inhibition. Catalyzes the ATP-dependent amination of UTP to CTP with either L-glutamine or ammonia as the source of nitrogen. Regulates intracellular CTP levels through interactions with the four ribonucleotide triphosphates. This is CTP synthase from Lactobacillus delbrueckii subsp. bulgaricus (strain ATCC BAA-365 / Lb-18).